The primary structure comprises 365 residues: MLGILLYCRPGFENDCANELQDKATALEVFGFVKTKRNSGYVFYQCYDPQQVEYLLEKLDYKQLIFARQLIAVKAFINDLPLDDRISPILEITRNLPLGGDLYVETPEGDDTKPLLTFCRKFTVPLRQALRKHNSLTAKENRNKIFYHLCFLDNKSAYIGFSVPHNRSEFYMGIPRLRSPSEAPSRSTLKLDEAIQVFLTAEEQQERLHSGMRAVDLGACPGGWTYQLVRRGLFVTAIDNGAMAQSLMDTGQVTHYTVDGFKYEPERKNIDWLVCDMIEKPKRVAKLMGQWLIDGWCKEAIFNFKLPMKKRYQEASEDIKILTDMFEKEDLQYELQAKQLYHDREEITLHVRLIGNHWGKQLGNG.

S-adenosyl-L-methionine contacts are provided by residues S187, 220–223, D239, D259, and D276; that span reads CPGG. The active-site Proton acceptor is K305.

Belongs to the class I-like SAM-binding methyltransferase superfamily. RNA methyltransferase RlmE family. RlmM subfamily. As to quaternary structure, monomer.

The protein localises to the cytoplasm. It catalyses the reaction cytidine(2498) in 23S rRNA + S-adenosyl-L-methionine = 2'-O-methylcytidine(2498) in 23S rRNA + S-adenosyl-L-homocysteine + H(+). In terms of biological role, catalyzes the 2'-O-methylation at nucleotide C2498 in 23S rRNA. In Psychromonas ingrahamii (strain DSM 17664 / CCUG 51855 / 37), this protein is Ribosomal RNA large subunit methyltransferase M.